Reading from the N-terminus, the 1167-residue chain is Kinesin-like protein KIN-14M (1167 aa).

The disordered stretch occupies residues 93–130 (PRKENDPGTQNSEGRRKIPKNPAMSEPSSPLSQTTLSS). Residues 117–130 (SEPSSPLSQTTLSS) show a composition bias toward low complexity. Coiled-coil stretches lie at residues 271 to 333 (VHQM…KEEM), 366 to 398 (AKYR…AMKS), and 432 to 489 (KQEL…ESRS). The Kinesin motor domain maps to 572 to 900 (NIRVHCRIRP…LKFADRVSGV (329 aa)). 656 to 663 (GQTGSGKT) is a binding site for ATP. Positions 907-944 (ANKEGKDIKEFKEQLSLLKDKIAKKDEEISRLQLQSHN) form a coiled coil. Disordered regions lie at residues 955–974 (SLLK…SKIQ) and 1083–1167 (PDQD…KRWT). Residues 958–972 (KHSSSSPGISSLGSK) are compositionally biased toward low complexity. Polar residues-rich tracts occupy residues 1113 to 1124 (ASRTTTPKTPQS) and 1151 to 1167 (TQAT…KRWT).

This sequence belongs to the TRAFAC class myosin-kinesin ATPase superfamily. Kinesin family. KIN-14 subfamily.

In Oryza sativa subsp. japonica (Rice), this protein is Kinesin-like protein KIN-14M.